Here is a 239-residue protein sequence, read N- to C-terminus: Purine nucleoside phosphorylase DeoD-type (239 aa).

His-5 contributes to the a purine D-ribonucleoside binding site. Phosphate contacts are provided by residues Gly-21, Arg-25, Arg-44, and 88–91 (RVGS). A purine D-ribonucleoside is bound by residues 180–182 (EME) and 204–205 (SD). Asp-205 (proton donor) is an active-site residue.

This sequence belongs to the PNP/UDP phosphorylase family. In terms of assembly, homohexamer; trimer of homodimers.

The catalysed reaction is a purine D-ribonucleoside + phosphate = a purine nucleobase + alpha-D-ribose 1-phosphate. It catalyses the reaction a purine 2'-deoxy-D-ribonucleoside + phosphate = a purine nucleobase + 2-deoxy-alpha-D-ribose 1-phosphate. Functionally, catalyzes the reversible phosphorolytic breakdown of the N-glycosidic bond in the beta-(deoxy)ribonucleoside molecules, with the formation of the corresponding free purine bases and pentose-1-phosphate. This is Purine nucleoside phosphorylase DeoD-type from Pectobacterium atrosepticum (strain SCRI 1043 / ATCC BAA-672) (Erwinia carotovora subsp. atroseptica).